Reading from the N-terminus, the 324-residue chain is MKQVNGEKLLASLGDGVKDIRGRITPDAPMDRVTWFRAGGLAELMFQPHDVDDLIAFLKILPEEVPLTVIGVGSNILVRDGGIPGVVLRLSAKGFGFVELAGENRILAGAICPDKHVAAMAMDNGIGGFHFYYGIPGAIGGAARMNAGANGVETRERLVEVNAVDRKGNKHVLSNAEMGYSYRHSAASADLIFTSVLFEGYPEDRAQIRAEMDAVRNHRETVQPVREKTGGSTFKNPPGHSAWKLIDEAGCRGLVIGGAQMSSLHCNFMINMGQATGYDLEYLGEQVRREVFEKDGIKLEWEIKRLGVFMPGREVRPFQGVTSE.

The FAD-binding PCMH-type domain occupies 36–203; that stretch reads FRAGGLAELM…TSVLFEGYPE (168 aa). The active site involves Arg-183. The active-site Proton donor is the Ser-232. Glu-302 is an active-site residue.

It belongs to the MurB family. FAD is required as a cofactor.

The protein resides in the cytoplasm. The catalysed reaction is UDP-N-acetyl-alpha-D-muramate + NADP(+) = UDP-N-acetyl-3-O-(1-carboxyvinyl)-alpha-D-glucosamine + NADPH + H(+). It functions in the pathway cell wall biogenesis; peptidoglycan biosynthesis. Cell wall formation. The chain is UDP-N-acetylenolpyruvoylglucosamine reductase from Rhizobium etli (strain CIAT 652).